A 198-amino-acid polypeptide reads, in one-letter code: MGSARRALSVVPAVLLILVLPVWAQNDTEPIVLEGKCLVVCDSNPATDSKGSSSSPLGISVRAANSKVAFSAVRSTNHEPSEMSNKTRIIYFDQILVNVGNFFTLESVFVAPRKGIYSFSFHVIKVYQSQTIQVNLMLNGKPVISAFAGDKDVTREAATNGVLLYLDKEDKVYLKLEKGNLLGGWQYSTFSGFLVFPL.

Positions 1–24 (MGSARRALSVVPAVLLILVLPVWA) are cleaved as a signal peptide. Residues Asn-26 and Asn-85 are each glycosylated (N-linked (GlcNAc...) asparagine). The 136-residue stretch at 63-198 (AANSKVAFSA…TFSGFLVFPL (136 aa)) folds into the C1q domain.

Homohexamer; disulfide-linked homotrimers. The trimers are assembled via the globular C1q domains. The trimers associate via N-terminal cysteine residues to form disulfide-linked hexamers. May form oligomers with CBLN1, CBLN2 and CBLN3 prior to secretion. Once secreted, does not interact with other CBLN family members. Strongly interacts with DCC in a NTN1-displaceable fashion. Weakly binds to NRXN1 and NRXN2 long and short isoforms produced by alternative promoter usage. Interaction with NRXN3 short isoform is hardly detectable; no interaction at all with NRXN3 long isoform. Does not interact with NEO1, GRID1 and GRID2. Sialoglycoprotein. Expressed in brain with high levels in particular thalamic nuclei. In the thalamus, predominantly expressed in neurons within the parafascicular nucleus. Found in the hippocampus, mostly in the dendrites and somata of pyramidal neurons (at protein level). Very low or no expression in most other brain regions. Highly expressed in the ventral medial habenula.

It is found in the secreted. The protein localises to the synapse. Functionally, acts as a synaptic organizer in specific subsets of neurons in the brain. Essential for the formation and maintenance of inhibitory GABAergic synapses. Promotes the development of dendrite-targeting inhibitory GABAergic synapses made by somatostatin-positive interneurons. May contribute to the function of ventral medial habenula region of the brain implicated in the regulation of anxiety-related behaviors. May play a role in CBLN3 export from the endoplasmic reticulum and secretion. The sequence is that of Cerebellin-4 (Cbln4) from Mus musculus (Mouse).